Reading from the N-terminus, the 423-residue chain is Gamma-glutamyl phosphate reductase (423 aa).

Belongs to the gamma-glutamyl phosphate reductase family.

Its subcellular location is the cytoplasm. The catalysed reaction is L-glutamate 5-semialdehyde + phosphate + NADP(+) = L-glutamyl 5-phosphate + NADPH + H(+). The protein operates within amino-acid biosynthesis; L-proline biosynthesis; L-glutamate 5-semialdehyde from L-glutamate: step 2/2. In terms of biological role, catalyzes the NADPH-dependent reduction of L-glutamate 5-phosphate into L-glutamate 5-semialdehyde and phosphate. The product spontaneously undergoes cyclization to form 1-pyrroline-5-carboxylate. The chain is Gamma-glutamyl phosphate reductase from Burkholderia vietnamiensis (strain G4 / LMG 22486) (Burkholderia cepacia (strain R1808)).